The following is a 211-amino-acid chain: Thymidylate kinase (211 aa).

11-18 serves as a coordination point for ATP; sequence GPDGAGKT.

The protein belongs to the thymidylate kinase family.

It carries out the reaction dTMP + ATP = dTDP + ADP. In terms of biological role, phosphorylation of dTMP to form dTDP in both de novo and salvage pathways of dTTP synthesis. The sequence is that of Thymidylate kinase from Streptococcus pyogenes serotype M18 (strain MGAS8232).